We begin with the raw amino-acid sequence, 147 residues long: Small ribosomal subunit protein bS6 (147 aa).

Positions 96–147 (VTEPSPMMKAKEERFTKRDDREERSDRSEAPRAEAPAKAEAPAKAEDEAAAE) are disordered. A compositionally biased stretch (basic and acidic residues) spans 104-147 (KAKEERFTKRDDREERSDRSEAPRAEAPAKAEAPAKAEDEAAAE).

This sequence belongs to the bacterial ribosomal protein bS6 family.

Its function is as follows. Binds together with bS18 to 16S ribosomal RNA. The chain is Small ribosomal subunit protein bS6 from Photobacterium profundum (strain SS9).